A 508-amino-acid chain; its full sequence is Phenylalanine--tRNA ligase alpha subunit (508 aa).

At Ala-2 the chain carries N-acetylalanine. Ser-193 and Ser-301 each carry phosphoserine. Lys-311 carries the post-translational modification N6-acetyllysine. L-phenylalanine-binding positions include Thr-329, 372–374 (QIE), and Tyr-412. Glu-414 contacts Mg(2+). Phe-438 is an L-phenylalanine binding site.

This sequence belongs to the class-II aminoacyl-tRNA synthetase family. Phe-tRNA synthetase alpha subunit type 2 subfamily. In terms of assembly, heterotetramer; dimer of two heterodimers formed by FARSA and FARSB. Mg(2+) is required as a cofactor.

The protein resides in the cytoplasm. It catalyses the reaction tRNA(Phe) + L-phenylalanine + ATP = L-phenylalanyl-tRNA(Phe) + AMP + diphosphate + H(+). The protein is Phenylalanine--tRNA ligase alpha subunit (Farsa) of Mus musculus (Mouse).